Reading from the N-terminus, the 553-residue chain is Probable inactive serine/threonine-protein kinase samkD (553 aa).

One can recognise an SAM domain in the interval 24–90 (WDNETVCKWL…FEYQILKNCY (67 aa)). Residues 134 to 393 (YQYIETISKN…SKELLKSFWF (260 aa)) enclose the Protein kinase domain. Residues 140 to 148 (ISKNKFCEI) and Lys165 each bind ATP.

It belongs to the protein kinase superfamily. Ser/Thr protein kinase family.

This Dictyostelium discoideum (Social amoeba) protein is Probable inactive serine/threonine-protein kinase samkD (samkD).